Consider the following 259-residue polypeptide: Short-chain dehydrogenase reductase 5 (259 aa).

12 to 36 contributes to the NAD(+) binding site; sequence IITGGASGIGAEAARLFTDHGAKVV. S144 lines the substrate pocket. Residue Y157 is the Proton acceptor of the active site.

It belongs to the short-chain dehydrogenases/reductases (SDR) family.

The sequence is that of Short-chain dehydrogenase reductase 5 (SDR5) from Arabidopsis thaliana (Mouse-ear cress).